A 270-amino-acid chain; its full sequence is Putative phosphoenolpyruvate synthase regulatory protein (270 aa).

154-161 (GVSRAGKT) is an ADP binding site.

It belongs to the pyruvate, phosphate/water dikinase regulatory protein family. PSRP subfamily.

The catalysed reaction is [pyruvate, water dikinase] + ADP = [pyruvate, water dikinase]-phosphate + AMP + H(+). The enzyme catalyses [pyruvate, water dikinase]-phosphate + phosphate + H(+) = [pyruvate, water dikinase] + diphosphate. Functionally, bifunctional serine/threonine kinase and phosphorylase involved in the regulation of the phosphoenolpyruvate synthase (PEPS) by catalyzing its phosphorylation/dephosphorylation. The polypeptide is Putative phosphoenolpyruvate synthase regulatory protein (Deinococcus geothermalis (strain DSM 11300 / CIP 105573 / AG-3a)).